The chain runs to 222 residues: CASP-like protein 1E1 (222 aa).

At 1–59 (MEASRVKPGFNGVGMAAGSVNGSSRRPGPGLGYGYGYYMGSGAAAGGSGRAAQAPVDGC) the chain is on the cytoplasmic side. Residues 60-80 (SVALRVFVVASTLVSAVVMGV) form a helical membrane-spanning segment. At 81-110 (DRQTRTIQITITDALPPLEVPLTANWSYSS) the chain is on the extracellular side. N105 carries an N-linked (GlcNAc...) asparagine glycan. Residues 111 to 131 (AFVYFVVANAMVCLFSAAALA) traverse the membrane as a helical segment. Topologically, residues 132 to 146 (ACRSRAAMVPVMVGD) are cytoplasmic. Residues 147 to 167 (LLALALLYSAVGAAAEFGILG) form a helical membrane-spanning segment. The Extracellular portion of the chain corresponds to 168–189 (ERGNSHVRWAKVCNVYGRFCDR). A helical transmembrane segment spans residues 190–210 (AMAAVIVSLIGAFANLVLLML). The Cytoplasmic segment spans residues 211–222 (NILTIHKSSSYY).

It belongs to the Casparian strip membrane proteins (CASP) family. Homodimer and heterodimers.

The protein resides in the cell membrane. The chain is CASP-like protein 1E1 from Sorghum bicolor (Sorghum).